A 64-amino-acid chain; its full sequence is Large ribosomal subunit protein uL29 (64 aa).

This sequence belongs to the universal ribosomal protein uL29 family.

This Acaryochloris marina (strain MBIC 11017) protein is Large ribosomal subunit protein uL29.